The chain runs to 261 residues: Triosephosphate isomerase (261 aa).

10–12 (NWK) contacts substrate. His100 serves as the catalytic Electrophile. Residue Glu172 is the Proton acceptor of the active site. Residues Gly178, Ser218, and 239–240 (GG) each bind substrate.

It belongs to the triosephosphate isomerase family. In terms of assembly, homodimer.

The protein resides in the cytoplasm. It catalyses the reaction D-glyceraldehyde 3-phosphate = dihydroxyacetone phosphate. It functions in the pathway carbohydrate biosynthesis; gluconeogenesis. It participates in carbohydrate degradation; glycolysis; D-glyceraldehyde 3-phosphate from glycerone phosphate: step 1/1. In terms of biological role, involved in the gluconeogenesis. Catalyzes stereospecifically the conversion of dihydroxyacetone phosphate (DHAP) to D-glyceraldehyde-3-phosphate (G3P). This chain is Triosephosphate isomerase, found in Mycobacterium sp. (strain JLS).